A 478-amino-acid polypeptide reads, in one-letter code: Proline--tRNA ligase (478 aa).

It belongs to the class-II aminoacyl-tRNA synthetase family. ProS type 3 subfamily. Homodimer.

It localises to the cytoplasm. It carries out the reaction tRNA(Pro) + L-proline + ATP = L-prolyl-tRNA(Pro) + AMP + diphosphate. Catalyzes the attachment of proline to tRNA(Pro) in a two-step reaction: proline is first activated by ATP to form Pro-AMP and then transferred to the acceptor end of tRNA(Pro). The sequence is that of Proline--tRNA ligase from Clostridium botulinum (strain ATCC 19397 / Type A).